A 555-amino-acid chain; its full sequence is Bifunctional epoxide hydrolase 2 (555 aa).

Residues 1–224 (MTLRAAVFDL…KVTGIQLLNT (224 aa)) form a phosphatase region. Residues D9 and D11 each coordinate Mg(2+). K43 carries the N6-acetyllysine modification. At K55 the chain carries N6-succinyllysine. 123–124 (TN) provides a ligand contact to phosphate. Position 185 (D185) interacts with Mg(2+). An N6-acetyllysine mark is found at K191 and K215. The epoxide hydrolase stretch occupies residues 235–555 (SDMSHGYVTV…ARNPPVVSKM (321 aa)). The 273-residue stretch at 259–531 (PAVCLCHGFP…CGHWTQMDKP (273 aa)) folds into the AB hydrolase-1 domain. The active-site Nucleophile is the D335. Phosphoserine is present on S370. Residue Y383 participates in substrate binding. K421 and K455 each carry N6-succinyllysine. The active-site Proton donor is the Y466. The S-(15-deoxy-Delta12,14-prostaglandin J2-9-yl)cysteine moiety is linked to residue C522. H524 serves as the catalytic Proton acceptor. Residues 553 to 555 (SKM) carry the Microbody targeting signal motif. K554 is modified (N6-succinyllysine).

This sequence belongs to the AB hydrolase superfamily. Epoxide hydrolase family. Homodimer. Mg(2+) is required as a cofactor. Post-translationally, the N-terminus is blocked. In terms of processing, the covalent modification of cysteine by 15-deoxy-Delta12,14-prostaglandin-J2 is autocatalytic and reversible. It may occur as an alternative to other cysteine modifications, such as S-nitrosylation and S-palmitoylation.

Its subcellular location is the cytoplasm. It is found in the peroxisome. The enzyme catalyses an epoxide + H2O = an ethanediol. It carries out the reaction (9S,10S)-10-hydroxy-9-(phosphooxy)octadecanoate + H2O = (9S,10S)-9,10-dihydroxyoctadecanoate + phosphate. It catalyses the reaction 12-phosphooxy-(9Z)-octadecenoate + H2O = 12-hydroxy-(9Z)-octadecenoate + phosphate. The catalysed reaction is 12-phosphooxy-(9E)-octadecenoate + H2O = 12-hydroxy-(9E)-octadecenoate + phosphate. The enzyme catalyses 12-(phosphooxy)octadecanoate + H2O = 12-hydroxyoctadecanoate + phosphate. It carries out the reaction 8,9-epoxy-(5Z,11Z,14Z)-eicosatrienoate + H2O = 8,9-dihydroxy-(5Z,11Z,14Z)-eicosatrienoate. It catalyses the reaction 11,12-epoxy-(5Z,8Z,14Z)-eicosatrienoate + H2O = 11,12-dihydroxy-(5Z,8Z,14Z)-eicosatrienoate. The catalysed reaction is 14,15-epoxy-(5Z,8Z,11Z)-eicosatrienoate + H2O = 14,15-dihydroxy-(5Z,8Z,11Z)-eicosatrienoate. The enzyme catalyses 9,10-epoxy-(12Z)-octadecenoate + H2O = 9,10-dihydroxy-(12Z)-octadecenoate. It carries out the reaction 8-hydroxy-(11S,12S)-epoxy-(5Z,9E,14Z)-eicosatrienoate + H2O = (8,11R,12S)-trihydroxy-(5Z,9E,14Z)-eicosatrienoate. It catalyses the reaction 10-hydroxy-(11S,12S)-epoxy- (5Z,8Z,14Z)-eicosatrienoate + H2O = (10,11S,12R)-trihydroxy-(5Z,8Z,14Z)-eicosatrienoate. The catalysed reaction is 1-tetradecanoyl-sn-glycerol 3-phosphate + H2O = 1-tetradecanoyl-sn-glycerol + phosphate. The enzyme catalyses 1-octadecanoyl-sn-glycero-3-phosphate + H2O = 1-octadecanoyl-sn-glycerol + phosphate. It carries out the reaction 1-(5Z,8Z,11Z,14Z-eicosatetraenoyl)-sn-glycero-3-phosphate + H2O = 1-(5Z,8Z,11Z,14Z-eicosatetraenoyl)-sn-glycerol + phosphate. It catalyses the reaction 1-hexadecanoyl-sn-glycero-3-phosphate + H2O = 1-hexadecanoyl-sn-glycerol + phosphate. The catalysed reaction is 1-(9Z-octadecenoyl)-sn-glycero-3-phosphate + H2O = 1-(9Z-octadecenoyl)-sn-glycerol + phosphate. The enzyme catalyses (8S,9R)-epoxy-(5Z,11Z,14Z)-eicosatrienoate + H2O = (8S,9S)-dihydroxy-(5Z,11Z,14Z)-eicosatrienoate. It carries out the reaction (11S,12R)-epoxy-(5Z,8Z,14Z)-eicosatrienoate + H2O = (11R,12R)-dihydroxy-(5Z,8Z,14Z)-eicosatrienoate. It catalyses the reaction (11S,12R)-epoxy-(5Z,8Z,14Z)-eicosatrienoate + H2O = (11S,12S)-dihydroxy-(5Z,8Z,14Z)-eicosatrienoate. The catalysed reaction is (14S,15R)-epoxy-(5Z,8Z,11Z)-eicosatrienoate + H2O = (14R,15R)-dihydroxy-(5Z,8Z,11Z)-eicosatrienoate. The enzyme catalyses (14S,15R)-epoxy-(5Z,8Z,11Z)-eicosatrienoate + H2O = (14S,15S)-dihydroxy-(5Z,8Z,11Z)-eicosatrienoate. It carries out the reaction (11R,12S)-epoxy-(5Z,8Z,14Z)-eicosatrienoate + H2O = (11S,12S)-dihydroxy-(5Z,8Z,14Z)-eicosatrienoate. It catalyses the reaction (11R,12S)-epoxy-(5Z,8Z,14Z)-eicosatrienoate + H2O = (11R,12R)-dihydroxy-(5Z,8Z,14Z)-eicosatrienoate. The catalysed reaction is (8S,9R)-epoxy-(5Z,11Z,14Z)-eicosatrienoate + H2O = (8R,9R)-dihydroxy-(5Z,11Z,14Z)-eicosatrienoate. The enzyme catalyses (14R,15S)-epoxy-(5Z,8Z,11Z)-eicosatrienoate + H2O = (14R,15R)-dihydroxy-(5Z,8Z,11Z)-eicosatrienoate. Its activity is regulated as follows. Inhibited by 1-(1-acetylpiperidin-4-yl)-3-(4-(trifl uoromethoxy)phenyl)urea (TPAU), 1-cyclohexyl-3-dodecylurea (CDU), 12-(3-adamantan-1-yl-ureido)-dodecanoic acid (AUDA), 1-((3S, 5S, 7S)-adamantan-1-yl)-3-(5-(2-(2-ethoxyethoxy) ethoxy)pentyl)urea (AEPU), N-adamantyl-N[']-cyclohexyl urea (ACU), 4-(((1S, 4S)-4-(3-((3S, 5S, 7S)-adamantan-1-yl) ureido)cyclohexyl)oxy)benzoic acid (c-AUCB), 4-(((1R, 4R)-4-(3-((3S, 5S, 7S)-adamantan-1-yl)ureido)cyclohexyl)oxy)benzoic acid (t-AUCB), 4-(((1R, 4R)-4-(3-(4(trifluoromethoxy)phenyl)ureido)cyclohexyl)oxy)benzoic acid (t-TAUCB) and to a lesser extent by 8-(3-((3S, 5S, 7S)-adamantan-1-yl)ureido) octanoic acid (AUOA). Phosphatase activity is inhibited by dodecyl-phosphate, phospholipids such as phospho-lysophosphatidic acids and fatty acids such as palmitic acid and lauric acid. Functionally, bifunctional enzyme. The C-terminal domain has epoxide hydrolase activity and acts on epoxides (alkene oxides, oxiranes) and arene oxides. Plays a role in xenobiotic metabolism by degrading potentially toxic epoxides. Also determines steady-state levels of physiological mediators. Bifunctional enzyme. The N-terminal domain has lipid phosphatase activity, with the highest activity towards threo-9,10-phosphonooxy-hydroxy-octadecanoic acid, followed by erythro-9,10-phosphonooxy-hydroxy-octadecanoic acid, 12-phosphonooxy-octadec-9Z-enoic acid and 12-phosphonooxy-octadec-9E-enoic acid. Has phosphatase activity toward lyso-glycerophospholipids with also some lower activity toward lysolipids of sphingolipid and isoprenoid phosphates. The protein is Bifunctional epoxide hydrolase 2 of Homo sapiens (Human).